The sequence spans 423 residues: Lysosomal acid phosphatase (423 aa).

Residues Met-1–Ala-30 form the signal peptide. Topologically, residues Arg-31 to Glu-380 are lumenal. The active-site Nucleophile is His-42. Residues Asn-92, Asn-133, Asn-167, Asn-177, Asn-191, Asn-197, and Asn-267 are each glycosylated (N-linked (GlcNAc...) asparagine). Cystine bridges form between Cys-159–Cys-370, Cys-212–Cys-310, and Cys-345–Cys-349. Catalysis depends on Asp-287, which acts as the Proton donor. N-linked (GlcNAc...) asparagine glycosylation is found at Asn-322 and Asn-331. The helical transmembrane segment at Val-381–Thr-401 threads the bilayer. At Val-402–Ala-423 the chain is on the cytoplasmic side.

The protein belongs to the histidine acid phosphatase family. Post-translationally, the membrane-bound form is converted to the soluble form by sequential proteolytic processing. First, the C-terminal cytoplasmic tail is removed. Cleavage by a lysosomal protease releases the soluble form in the lysosome lumen.

It is found in the lysosome membrane. The protein resides in the lysosome lumen. It carries out the reaction a phosphate monoester + H2O = an alcohol + phosphate. In Rattus norvegicus (Rat), this protein is Lysosomal acid phosphatase (Acp2).